A 391-amino-acid polypeptide reads, in one-letter code: Flagellin (391 aa).

It belongs to the bacterial flagellin family.

The protein localises to the secreted. It localises to the bacterial flagellum. Functionally, flagellin is the subunit protein which polymerizes to form the filaments of bacterial flagella. The polypeptide is Flagellin (flaA) (Bordetella bronchiseptica (strain ATCC BAA-588 / NCTC 13252 / RB50) (Alcaligenes bronchisepticus)).